A 161-amino-acid chain; its full sequence is Protein-export protein SecB (161 aa).

This sequence belongs to the SecB family. As to quaternary structure, homotetramer, a dimer of dimers. One homotetramer interacts with 1 SecA dimer.

It localises to the cytoplasm. Functionally, one of the proteins required for the normal export of preproteins out of the cell cytoplasm. It is a molecular chaperone that binds to a subset of precursor proteins, maintaining them in a translocation-competent state. It also specifically binds to its receptor SecA. The sequence is that of Protein-export protein SecB from Shewanella sp. (strain ANA-3).